The chain runs to 21 residues: Fibrinogen beta chain (21 aa).

Glutamine 1 is modified (pyrrolidone carboxylic acid). The span at 1 to 11 shows a compositional bias: acidic residues; that stretch reads QHSTDYDEVED. Residues 1–21 are disordered; it reads QHSTDYDEVEDDRAKLHLDAR. Threonine 4 carries an O-linked (GalNAc...) threonine glycan. Tyrosine 6 carries the post-translational modification Sulfotyrosine. Positions 12–21 are enriched in basic and acidic residues; the sequence is DRAKLHLDAR.

Heterohexamer; disulfide linked. Contains 2 sets of 3 non-identical chains (alpha, beta and gamma). The 2 heterotrimers are in head to head conformation with the N-termini in a small central domain. Conversion of fibrinogen to fibrin is triggered by thrombin, which cleaves fibrinopeptides A and B from alpha and beta chains, and thus exposes the N-terminal polymerization sites responsible for the formation of the soft clot.

It is found in the secreted. In terms of biological role, cleaved by the protease thrombin to yield monomers which, together with fibrinogen alpha (FGA) and fibrinogen gamma (FGG), polymerize to form an insoluble fibrin matrix. Fibrin has a major function in hemostasis as one of the primary components of blood clots. In addition, functions during the early stages of wound repair to stabilize the lesion and guide cell migration during re-epithelialization. Was originally thought to be essential for platelet aggregation, based on in vitro studies using anticoagulated blood. However subsequent studies have shown that it is not absolutely required for thrombus formation in vivo. Enhances expression of SELP in activated platelets. Maternal fibrinogen is essential for successful pregnancy. Fibrin deposition is also associated with infection, where it protects against IFNG-mediated hemorrhage. May also facilitate the antibacterial immune response via both innate and T-cell mediated pathways. The sequence is that of Fibrinogen beta chain (FGB) from Muntiacus muntjak (Barking deer).